An 88-amino-acid polypeptide reads, in one-letter code: NADH-ubiquinone oxidoreductase chain 4L (88 aa).

Transmembrane regions (helical) follow at residues 1–21 (MNLS…NRKN), 22–42 (IILM…LVLM), and 55–75 (FSIY…SILV).

Belongs to the complex I subunit 4L family.

It localises to the mitochondrion membrane. It carries out the reaction a ubiquinone + NADH + 5 H(+)(in) = a ubiquinol + NAD(+) + 4 H(+)(out). Functionally, core subunit of the mitochondrial membrane respiratory chain NADH dehydrogenase (Complex I) that is believed to belong to the minimal assembly required for catalysis. Complex I functions in the transfer of electrons from NADH to the respiratory chain. The immediate electron acceptor for the enzyme is believed to be ubiquinone. The protein is NADH-ubiquinone oxidoreductase chain 4L (ND4L) of Schizophyllum commune (Split gill fungus).